We begin with the raw amino-acid sequence, 195 residues long: Penicillin-binding protein activator LpoB (195 aa).

An N-terminal signal peptide occupies residues 1 to 16 (MKKRALIVLAALVLAS). Residue Cys17 is the site of N-palmitoyl cysteine attachment. Cys17 is lipidated: S-diacylglycerol cysteine. Residues 19–51 (SRKPASPPAPIEPVPPPVTVSVQPPPPATSEPV) form a disordered region. Over residues 23-51 (ASPPAPIEPVPPPVTVSVQPPPPATSEPV) the composition is skewed to pro residues.

Belongs to the LpoB family. As to quaternary structure, interacts with PBP1b.

It localises to the cell outer membrane. Regulator of peptidoglycan synthesis that is essential for the function of penicillin-binding protein 1B (PBP1b). This is Penicillin-binding protein activator LpoB from Sodalis glossinidius (strain morsitans).